A 230-amino-acid chain; its full sequence is Cytidylate kinase (230 aa).

Residue 12-20 (GPSGAGKGT) participates in ATP binding.

It belongs to the cytidylate kinase family. Type 1 subfamily.

It localises to the cytoplasm. The enzyme catalyses CMP + ATP = CDP + ADP. It catalyses the reaction dCMP + ATP = dCDP + ADP. This chain is Cytidylate kinase, found in Shewanella halifaxensis (strain HAW-EB4).